Consider the following 371-residue polypeptide: Bifunctional enzyme IspD/IspF (371 aa).

Positions 1–214 (MNSCFIILAG…NSDIKFNNLI (214 aa)) are 2-C-methyl-D-erythritol 4-phosphate cytidylyltransferase. Residues 215–371 (KFGIGFDVHR…EVIASVIKND (157 aa)) form a 2-C-methyl-D-erythritol 2,4-cyclodiphosphate synthase region. A divalent metal cation is bound by residues aspartate 221 and histidine 223. 4-CDP-2-C-methyl-D-erythritol 2-phosphate is bound by residues 221–223 (DVH) and 247–248 (HS). An a divalent metal cation-binding site is contributed by histidine 255. 4-CDP-2-C-methyl-D-erythritol 2-phosphate contacts are provided by residues 269-271 (DIG), 274-278 (FSDKN), and lysine 355.

The protein in the N-terminal section; belongs to the IspD/TarI cytidylyltransferase family. IspD subfamily. In the C-terminal section; belongs to the IspF family. A divalent metal cation serves as cofactor.

It carries out the reaction 2-C-methyl-D-erythritol 4-phosphate + CTP + H(+) = 4-CDP-2-C-methyl-D-erythritol + diphosphate. The catalysed reaction is 4-CDP-2-C-methyl-D-erythritol 2-phosphate = 2-C-methyl-D-erythritol 2,4-cyclic diphosphate + CMP. The protein operates within isoprenoid biosynthesis; isopentenyl diphosphate biosynthesis via DXP pathway; isopentenyl diphosphate from 1-deoxy-D-xylulose 5-phosphate: step 2/6. Its pathway is isoprenoid biosynthesis; isopentenyl diphosphate biosynthesis via DXP pathway; isopentenyl diphosphate from 1-deoxy-D-xylulose 5-phosphate: step 4/6. Functionally, bifunctional enzyme that catalyzes the formation of 4-diphosphocytidyl-2-C-methyl-D-erythritol from CTP and 2-C-methyl-D-erythritol 4-phosphate (MEP) (IspD), and catalyzes the conversion of 4-diphosphocytidyl-2-C-methyl-D-erythritol 2-phosphate (CDP-ME2P) to 2-C-methyl-D-erythritol 2,4-cyclodiphosphate (ME-CPP) with a corresponding release of cytidine 5-monophosphate (CMP) (IspF). This Pelagibacter ubique (strain HTCC1062) protein is Bifunctional enzyme IspD/IspF.